A 510-amino-acid polypeptide reads, in one-letter code: GMP synthase [glutamine-hydrolyzing] (510 aa).

In terms of domain architecture, Glutamine amidotransferase type-1 spans 5-195 (LVLVVDFGGQ…LFNVCNLKGD (191 aa)). The Nucleophile role is filled by Cys82. Active-site residues include His169 and Glu171. The region spanning 196 to 385 (WSMSSFAEQQ…LGIPHKLVWR (190 aa)) is the GMPS ATP-PPase domain. 223-229 (SGGVDSS) is an ATP binding site.

Homodimer.

The catalysed reaction is XMP + L-glutamine + ATP + H2O = GMP + L-glutamate + AMP + diphosphate + 2 H(+). It participates in purine metabolism; GMP biosynthesis; GMP from XMP (L-Gln route): step 1/1. In terms of biological role, catalyzes the synthesis of GMP from XMP. The protein is GMP synthase [glutamine-hydrolyzing] of Clostridium botulinum (strain Loch Maree / Type A3).